We begin with the raw amino-acid sequence, 175 residues long: 2-oxo-4-hydroxy-4-carboxy-5-ureidoimidazoline decarboxylase (175 aa).

Residue His67 is the Proton donor of the active site. Substrate-binding positions include Pro68, 84-88 (SRGEQ), and 119-123 (FVICA). Residues 173–175 (TKL) carry the Microbody targeting signal motif.

It belongs to the OHCU decarboxylase family. As to quaternary structure, homodimer.

The protein localises to the peroxisome. The enzyme catalyses 5-hydroxy-2-oxo-4-ureido-2,5-dihydro-1H-imidazole-5-carboxylate + H(+) = (S)-allantoin + CO2. It functions in the pathway purine metabolism; urate degradation; (S)-allantoin from urate: step 3/3. In terms of biological role, catalyzes the stereoselective decarboxylation of 2-oxo-4-hydroxy-4-carboxy-5-ureidoimidazoline (OHCU) to (S)-allantoin. The polypeptide is 2-oxo-4-hydroxy-4-carboxy-5-ureidoimidazoline decarboxylase (urad) (Amia calva (Bowfin)).